The sequence spans 650 residues: DNA gyrase subunit B (650 aa).

The 115-residue stretch at 429–543 (NELFIVEGDS…AGYVYIAQPP (115 aa)) folds into the Toprim domain. 3 residues coordinate Mg(2+): Glu435, Asp508, and Asp510.

Belongs to the type II topoisomerase GyrB family. Heterotetramer, composed of two GyrA and two GyrB chains. In the heterotetramer, GyrA contains the active site tyrosine that forms a transient covalent intermediate with DNA, while GyrB binds cofactors and catalyzes ATP hydrolysis. The cofactor is Mg(2+). It depends on Mn(2+) as a cofactor. Ca(2+) serves as cofactor.

It is found in the cytoplasm. It carries out the reaction ATP-dependent breakage, passage and rejoining of double-stranded DNA.. Its function is as follows. A type II topoisomerase that negatively supercoils closed circular double-stranded (ds) DNA in an ATP-dependent manner to modulate DNA topology and maintain chromosomes in an underwound state. Negative supercoiling favors strand separation, and DNA replication, transcription, recombination and repair, all of which involve strand separation. Also able to catalyze the interconversion of other topological isomers of dsDNA rings, including catenanes and knotted rings. Type II topoisomerases break and join 2 DNA strands simultaneously in an ATP-dependent manner. The polypeptide is DNA gyrase subunit B (Streptococcus pyogenes serotype M18 (strain MGAS8232)).